Reading from the N-terminus, the 287-residue chain is Lipoyl synthase (287 aa).

7 residues coordinate [4Fe-4S] cluster: C34, C39, C45, C60, C64, C67, and S273. The region spanning 46–262 is the Radical SAM core domain; that stretch reads WNKRHATVMI…KYIAYSKGFL (217 aa).

Belongs to the radical SAM superfamily. Lipoyl synthase family. Requires [4Fe-4S] cluster as cofactor.

The protein localises to the cytoplasm. It catalyses the reaction [[Fe-S] cluster scaffold protein carrying a second [4Fe-4S](2+) cluster] + N(6)-octanoyl-L-lysyl-[protein] + 2 oxidized [2Fe-2S]-[ferredoxin] + 2 S-adenosyl-L-methionine + 4 H(+) = [[Fe-S] cluster scaffold protein] + N(6)-[(R)-dihydrolipoyl]-L-lysyl-[protein] + 4 Fe(3+) + 2 hydrogen sulfide + 2 5'-deoxyadenosine + 2 L-methionine + 2 reduced [2Fe-2S]-[ferredoxin]. It participates in protein modification; protein lipoylation via endogenous pathway; protein N(6)-(lipoyl)lysine from octanoyl-[acyl-carrier-protein]: step 2/2. Catalyzes the radical-mediated insertion of two sulfur atoms into the C-6 and C-8 positions of the octanoyl moiety bound to the lipoyl domains of lipoate-dependent enzymes, thereby converting the octanoylated domains into lipoylated derivatives. This is Lipoyl synthase from Wolbachia sp. subsp. Brugia malayi (strain TRS).